Reading from the N-terminus, the 240-residue chain is 1-(5-phosphoribosyl)-5-[(5-phosphoribosylamino)methylideneamino] imidazole-4-carboxamide isomerase (240 aa).

Aspartate 8 serves as the catalytic Proton acceptor. Catalysis depends on aspartate 129, which acts as the Proton donor.

This sequence belongs to the HisA/HisF family.

It is found in the cytoplasm. The catalysed reaction is 1-(5-phospho-beta-D-ribosyl)-5-[(5-phospho-beta-D-ribosylamino)methylideneamino]imidazole-4-carboxamide = 5-[(5-phospho-1-deoxy-D-ribulos-1-ylimino)methylamino]-1-(5-phospho-beta-D-ribosyl)imidazole-4-carboxamide. The protein operates within amino-acid biosynthesis; L-histidine biosynthesis; L-histidine from 5-phospho-alpha-D-ribose 1-diphosphate: step 4/9. The polypeptide is 1-(5-phosphoribosyl)-5-[(5-phosphoribosylamino)methylideneamino] imidazole-4-carboxamide isomerase (Listeria monocytogenes serotype 4a (strain HCC23)).